The chain runs to 231 residues: Orotidine 5'-phosphate decarboxylase (231 aa).

Residues aspartate 11, lysine 33, 60–69 (DLKFHDIPNT), threonine 120, arginine 181, glutamine 190, glycine 210, and arginine 211 contribute to the substrate site. Lysine 62 functions as the Proton donor in the catalytic mechanism.

The protein belongs to the OMP decarboxylase family. Type 1 subfamily. In terms of assembly, homodimer.

It carries out the reaction orotidine 5'-phosphate + H(+) = UMP + CO2. The protein operates within pyrimidine metabolism; UMP biosynthesis via de novo pathway; UMP from orotate: step 2/2. Functionally, catalyzes the decarboxylation of orotidine 5'-monophosphate (OMP) to uridine 5'-monophosphate (UMP). This is Orotidine 5'-phosphate decarboxylase from Colwellia psychrerythraea (strain 34H / ATCC BAA-681) (Vibrio psychroerythus).